The sequence spans 443 residues: Xaa-Pro dipeptidase (443 aa).

Mn(2+) contacts are provided by aspartate 246, aspartate 257, histidine 339, glutamate 384, and glutamate 423.

This sequence belongs to the peptidase M24B family. Bacterial-type prolidase subfamily. Mn(2+) is required as a cofactor.

It carries out the reaction Xaa-L-Pro dipeptide + H2O = an L-alpha-amino acid + L-proline. In terms of biological role, splits dipeptides with a prolyl residue in the C-terminal position. The protein is Xaa-Pro dipeptidase of Shigella boydii serotype 18 (strain CDC 3083-94 / BS512).